The primary structure comprises 425 residues: tRNA(Ile)-lysidine synthase (425 aa).

Serine 27–serine 32 is an ATP binding site.

It belongs to the tRNA(Ile)-lysidine synthase family.

It is found in the cytoplasm. It carries out the reaction cytidine(34) in tRNA(Ile2) + L-lysine + ATP = lysidine(34) in tRNA(Ile2) + AMP + diphosphate + H(+). Functionally, ligates lysine onto the cytidine present at position 34 of the AUA codon-specific tRNA(Ile) that contains the anticodon CAU, in an ATP-dependent manner. Cytidine is converted to lysidine, thus changing the amino acid specificity of the tRNA from methionine to isoleucine. The polypeptide is tRNA(Ile)-lysidine synthase (Streptococcus pneumoniae (strain P1031)).